We begin with the raw amino-acid sequence, 474 residues long: Glutamate--tRNA ligase (474 aa).

Positions 9–19 (PSPTGYLHVGG) match the 'HIGH' region motif. The 'KMSKS' region motif lies at 240–244 (KLSKR). Lys-243 provides a ligand contact to ATP.

Belongs to the class-I aminoacyl-tRNA synthetase family. Glutamate--tRNA ligase type 1 subfamily. In terms of assembly, monomer.

The protein localises to the cytoplasm. It carries out the reaction tRNA(Glu) + L-glutamate + ATP = L-glutamyl-tRNA(Glu) + AMP + diphosphate. Catalyzes the attachment of glutamate to tRNA(Glu) in a two-step reaction: glutamate is first activated by ATP to form Glu-AMP and then transferred to the acceptor end of tRNA(Glu). The polypeptide is Glutamate--tRNA ligase (Aliivibrio salmonicida (strain LFI1238) (Vibrio salmonicida (strain LFI1238))).